The chain runs to 6919 residues: Nonribosomal peptide synthetase easA (6919 aa).

Residues T17–E93 form the Carrier 1 domain. S54 bears the O-(pantetheine 4'-phosphoryl)serine mark. An epimerization 1 region spans residues E123–M427. The disordered stretch occupies residues F294 to N319. A compositionally biased stretch (basic and acidic residues) spans N304 to N319. Residues L604 to L981 are condensation 1. An adenylation 1 region spans residues Q1003–R1394. In terms of domain architecture, Carrier 2 spans E1531 to D1608. S1569 is subject to O-(pantetheine 4'-phosphoryl)serine. An epimerization 2 region spans residues L1617–E2031. Residues V2072–K2509 form a condensation 2 region. Positions R2541 to R2930 are adenylation 2. In terms of domain architecture, Carrier 3 spans A3067 to M3143. S3104 bears the O-(pantetheine 4'-phosphoryl)serine mark. The segment at E3188–L3599 is condensation 3. The segment at Q3620–R4018 is adenylation 3. In terms of domain architecture, Carrier 4 spans T4151 to T4228. Position 4188 is an O-(pantetheine 4'-phosphoryl)serine (S4188). The segment at E4282–V4708 is condensation 4. The tract at residues E4732–R5133 is adenylation 4. One can recognise a Carrier 5 domain in the interval A5260–E5337. O-(pantetheine 4'-phosphoryl)serine is present on S5296. Residues E5380–N5775 form a condensation 5 region. An adenylation 5 region spans residues S5824–I6216. Residues E6344 to T6421 enclose the Carrier 6 domain. S6381 is subject to O-(pantetheine 4'-phosphoryl)serine.

It participates in antibiotic biosynthesis. Nonribosomal peptide synthetase; part of the gene cluster that mediates the biosynthesis of emericellamides, secondary metabolites acting as antibiotics. The biosynthesis of emericellamides initiates from the highly reducing polyketide synthase easB which catalyzes the formation of the linear polyketide chain. EasB produces several polyketides that can be further processed by the downstream enzymes. The polyketides are released from easB as linear polyketide carboxylic acids, which are converted to CoA thioesters by the acyl-CoA ligase easD. The substrates are then loaded onto the acyltransferase easC, which shuttles them to the first thiolation (T) domain of the nonribosomal peptide synthetase easA. EasA then performs condensation of the polyketides with one glycine, two alanine, one valine and one leucine residues. A last step of cyclization leads to the production of emericellamides. In Emericella nidulans (strain FGSC A4 / ATCC 38163 / CBS 112.46 / NRRL 194 / M139) (Aspergillus nidulans), this protein is Nonribosomal peptide synthetase easA.